We begin with the raw amino-acid sequence, 206 residues long: Large ribosomal subunit protein uL4 (206 aa).

Positions 60-84 are disordered; sequence TAKPFKQKGTGHARQGSKRSPQFRG. The span at 64-76 shows a compositional bias: basic residues; sequence FKQKGTGHARQGS.

The protein belongs to the universal ribosomal protein uL4 family. As to quaternary structure, part of the 50S ribosomal subunit.

In terms of biological role, one of the primary rRNA binding proteins, this protein initially binds near the 5'-end of the 23S rRNA. It is important during the early stages of 50S assembly. It makes multiple contacts with different domains of the 23S rRNA in the assembled 50S subunit and ribosome. Functionally, forms part of the polypeptide exit tunnel. This Rhodospirillum rubrum (strain ATCC 11170 / ATH 1.1.1 / DSM 467 / LMG 4362 / NCIMB 8255 / S1) protein is Large ribosomal subunit protein uL4.